A 294-amino-acid polypeptide reads, in one-letter code: Bifunctional protein FolD (294 aa).

NADP(+) contacts are provided by residues 171–173, S196, and I237; that span reads GRS.

This sequence belongs to the tetrahydrofolate dehydrogenase/cyclohydrolase family. In terms of assembly, homodimer.

It catalyses the reaction (6R)-5,10-methylene-5,6,7,8-tetrahydrofolate + NADP(+) = (6R)-5,10-methenyltetrahydrofolate + NADPH. The enzyme catalyses (6R)-5,10-methenyltetrahydrofolate + H2O = (6R)-10-formyltetrahydrofolate + H(+). The protein operates within one-carbon metabolism; tetrahydrofolate interconversion. Its function is as follows. Catalyzes the oxidation of 5,10-methylenetetrahydrofolate to 5,10-methenyltetrahydrofolate and then the hydrolysis of 5,10-methenyltetrahydrofolate to 10-formyltetrahydrofolate. This chain is Bifunctional protein FolD, found in Synechocystis sp. (strain ATCC 27184 / PCC 6803 / Kazusa).